Reading from the N-terminus, the 572-residue chain is Neuronal acetylcholine receptor subunit alpha-9-I (572 aa).

An N-terminal signal peptide occupies residues 1–19; the sequence is MKTVVLLTWISCWIDVCTS. At 20 to 232 the chain is on the extracellular side; it reads AQGRYAQKLL…YTLHLKRRSL (213 aa). A glycan (N-linked (GlcNAc...) asparagine) is linked at Asn51. A disulfide bridge connects residues Cys149 and Cys163. Asn164 carries an N-linked (GlcNAc...) asparagine glycan. Cys213 and Cys214 form a disulfide bridge. The next 3 membrane-spanning stretches (helical) occupy residues 233 to 253, 263 to 283, and 297 to 317; these read FYIF…PLGF, VSLG…VAES, and YIAT…IMNI. Topologically, residues 318-550 are cytoplasmic; that stretch reads HFCGAEAKPV…WKKVAKVMDR (233 aa). The segment at 405–458 is disordered; it reads GHLQNHHSTHQNHLDNCRYANGGHRDDHYSNRSNQNHHSNRSQTSKGEGGEEKR. Over residues 435–447 the composition is skewed to low complexity; that stretch reads NRSNQNHHSNRSQ. Residues 551–571 form a helical membrane-spanning segment; it reads FFMWIFFIMVFLMSILIIGKA.

The protein belongs to the ligand-gated ion channel (TC 1.A.9) family. Acetylcholine receptor (TC 1.A.9.1) subfamily. In terms of tissue distribution, expressed in the liver, olfactory mucosa, pituitary gland, hair cells of the saccule and spleen.

The protein localises to the postsynaptic cell membrane. Its subcellular location is the cell membrane. This is Neuronal acetylcholine receptor subunit alpha-9-I (nachra9) from Oncorhynchus mykiss (Rainbow trout).